We begin with the raw amino-acid sequence, 369 residues long: 3-dehydroquinate synthase (369 aa).

Residues 71-76 (DGECHK), 105-109 (GVIND), 129-130 (TT), K142, K151, and 169-172 (TLST) contribute to the NAD(+) site. Zn(2+) contacts are provided by E184, H247, and H264.

Belongs to the sugar phosphate cyclases superfamily. Dehydroquinate synthase family. The cofactor is Co(2+). Zn(2+) is required as a cofactor. Requires NAD(+) as cofactor.

The protein localises to the cytoplasm. The catalysed reaction is 7-phospho-2-dehydro-3-deoxy-D-arabino-heptonate = 3-dehydroquinate + phosphate. It functions in the pathway metabolic intermediate biosynthesis; chorismate biosynthesis; chorismate from D-erythrose 4-phosphate and phosphoenolpyruvate: step 2/7. Functionally, catalyzes the conversion of 3-deoxy-D-arabino-heptulosonate 7-phosphate (DAHP) to dehydroquinate (DHQ). This is 3-dehydroquinate synthase from Dichelobacter nodosus (strain VCS1703A).